Reading from the N-terminus, the 152-residue chain is Xanthine-guanine phosphoribosyltransferase (152 aa).

Residues 37–38 (RG), R69, and 88–96 (DDLVDTGGT) contribute to the 5-phospho-alpha-D-ribose 1-diphosphate site. Residue R69 coordinates GMP. D89 serves as a coordination point for Mg(2+). 2 residues coordinate guanine: D92 and I135. Residues D92 and I135 each contribute to the xanthine site. GMP-binding positions include 92-96 (DTGGT) and 134-135 (WI).

Belongs to the purine/pyrimidine phosphoribosyltransferase family. XGPT subfamily. In terms of assembly, homotetramer. Mg(2+) is required as a cofactor.

It localises to the cell inner membrane. It catalyses the reaction GMP + diphosphate = guanine + 5-phospho-alpha-D-ribose 1-diphosphate. The catalysed reaction is XMP + diphosphate = xanthine + 5-phospho-alpha-D-ribose 1-diphosphate. It carries out the reaction IMP + diphosphate = hypoxanthine + 5-phospho-alpha-D-ribose 1-diphosphate. It functions in the pathway purine metabolism; GMP biosynthesis via salvage pathway; GMP from guanine: step 1/1. It participates in purine metabolism; XMP biosynthesis via salvage pathway; XMP from xanthine: step 1/1. Purine salvage pathway enzyme that catalyzes the transfer of the ribosyl-5-phosphate group from 5-phospho-alpha-D-ribose 1-diphosphate (PRPP) to the N9 position of the 6-oxopurines guanine and xanthine to form the corresponding ribonucleotides GMP (guanosine 5'-monophosphate) and XMP (xanthosine 5'-monophosphate), with the release of PPi. To a lesser extent, also acts on hypoxanthine. The chain is Xanthine-guanine phosphoribosyltransferase from Edwardsiella ictaluri (strain 93-146).